A 721-amino-acid polypeptide reads, in one-letter code: Putative cullin-like protein 1 (721 aa).

Residues 651–713 (DRRYAIDAAL…RDYLERDTEN (63 aa)) enclose the Cullin neddylation domain.

Belongs to the cullin family.

This Arabidopsis thaliana (Mouse-ear cress) protein is Putative cullin-like protein 1.